Consider the following 244-residue polypeptide: Protein A47 (244 aa).

Belongs to the orthopoxvirus A47 protein family.

The chain is Protein A47 from Homo sapiens (Human).